Reading from the N-terminus, the 446-residue chain is MAATIVSVKARQIFDSRGNPTVEVDVCCSDGTFARAAVPSGASTGVYEALELRDGGSDYLGKGVSKAVDNVNSVIAPALIGKDPTSQAELDNFMVQQLDGTKNEWGWCKQKLGANAILAVSLAICKAGAIIKKIPLYQHIANLAGNKQLVLPVPAFNVINGGSHAGNKLAMQEFMILPTGAASFKEAMKMGVEVYHNLKSVIKKKYGQDATNVGDEGGFAPNIQENKEGLELLKTAIEKAGYTGKVVIGMDVAASEFYNDKDKTYDLNFKEENNDGSQKISGDSLKNVYKSFVSEYPIVSIEDPFDQDDWEHYAKMTAEIGEQVQIVGDDLLVTNPTRVAKAIQEKSCNALLLKVNQIGSVTESIEAVKMSKRAGWGVMTSHRSGETEDTFIADLAVGLATGQIKTGAPCRSERLAKYNQLLRIEEELGAAAVYAGAKFRAPVEPY.

Substrate contacts are provided by His164 and Glu173. Residue Glu216 is the Proton donor of the active site. Mg(2+) is bound by residues Asp251, Glu302, and Asp329. Substrate is bound by residues Glu302 and Asp329. Lys354 serves as the catalytic Proton acceptor. Substrate contacts are provided by residues 381–384 and Lys405; that span reads SHRS.

The protein belongs to the enolase family. In terms of assembly, homodimer. Requires Mg(2+) as cofactor.

It localises to the cytoplasm. It carries out the reaction (2R)-2-phosphoglycerate = phosphoenolpyruvate + H2O. The protein operates within carbohydrate degradation; glycolysis; pyruvate from D-glyceraldehyde 3-phosphate: step 4/5. This Oryza sativa subsp. japonica (Rice) protein is Enolase (ENO1).